The sequence spans 789 residues: UPF0313 protein VC_1711 (789 aa).

The 280-residue stretch at 363–642 (AYDMIKTSVN…KALLRYHDPA (280 aa)) folds into the Radical SAM core domain. [4Fe-4S] cluster-binding residues include Cys377, Cys381, and Cys384. A disordered region spans residues 669-789 (PEKDSDLVTP…NTQRQPQRAR (121 aa)). A compositionally biased stretch (basic residues) spans 683 to 698 (KSGRHGANRFATKHTH). 3 stretches are compositionally biased toward polar residues: residues 716–726 (RPNSGNKSNQG), 733–763 (PTGS…QRGS), and 778–789 (RGNTQRQPQRAR).

This sequence belongs to the UPF0313 family. [4Fe-4S] cluster serves as cofactor.

The sequence is that of UPF0313 protein VC_1711 from Vibrio cholerae serotype O1 (strain ATCC 39315 / El Tor Inaba N16961).